The primary structure comprises 462 residues: Siroheme synthase (462 aa).

Positions 1–203 are precorrin-2 dehydrogenase /sirohydrochlorin ferrochelatase; sequence MQYFPIFVDT…GNNSKAEQMM (203 aa). NAD(+)-binding positions include 22-23 and 43-44; these read EV and PW. Ser-128 carries the post-translational modification Phosphoserine. The interval 217–462 is uroporphyrinogen-III C-methyltransferase; the sequence is GEVYLVGAGP…EKLNWFGADA (246 aa). Pro-226 contributes to the S-adenosyl-L-methionine binding site. The active-site Proton acceptor is the Asp-249. Lys-271 functions as the Proton donor in the catalytic mechanism. Residues 302–304, Ile-307, 332–333, Met-384, and Ala-413 each bind S-adenosyl-L-methionine; these read GGD and TA.

The protein in the N-terminal section; belongs to the precorrin-2 dehydrogenase / sirohydrochlorin ferrochelatase family. It in the C-terminal section; belongs to the precorrin methyltransferase family.

It carries out the reaction uroporphyrinogen III + 2 S-adenosyl-L-methionine = precorrin-2 + 2 S-adenosyl-L-homocysteine + H(+). It catalyses the reaction precorrin-2 + NAD(+) = sirohydrochlorin + NADH + 2 H(+). The enzyme catalyses siroheme + 2 H(+) = sirohydrochlorin + Fe(2+). It functions in the pathway cofactor biosynthesis; adenosylcobalamin biosynthesis; precorrin-2 from uroporphyrinogen III: step 1/1. The protein operates within cofactor biosynthesis; adenosylcobalamin biosynthesis; sirohydrochlorin from precorrin-2: step 1/1. It participates in porphyrin-containing compound metabolism; siroheme biosynthesis; precorrin-2 from uroporphyrinogen III: step 1/1. Its pathway is porphyrin-containing compound metabolism; siroheme biosynthesis; siroheme from sirohydrochlorin: step 1/1. It functions in the pathway porphyrin-containing compound metabolism; siroheme biosynthesis; sirohydrochlorin from precorrin-2: step 1/1. Multifunctional enzyme that catalyzes the SAM-dependent methylations of uroporphyrinogen III at position C-2 and C-7 to form precorrin-2 via precorrin-1. Then it catalyzes the NAD-dependent ring dehydrogenation of precorrin-2 to yield sirohydrochlorin. Finally, it catalyzes the ferrochelation of sirohydrochlorin to yield siroheme. The protein is Siroheme synthase of Pseudoalteromonas atlantica (strain T6c / ATCC BAA-1087).